A 276-amino-acid chain; its full sequence is Putative glycosyltransferase 6 domain-containing protein 1 (276 aa).

Residues 1–6 lie on the Cytoplasmic side of the membrane; sequence MNSKRM. Residues 7–23 traverse the membrane as a helical; Signal-anchor for type II membrane protein segment; that stretch reads LLLVLFAFSLMLVERYF. The Lumenal segment spans residues 24-276; the sequence is RNHQVEELRL…NKYFYLNKPT (253 aa). Residue Asn-74 is glycosylated (N-linked (GlcNAc...) asparagine). Residues 82–87, 173–175, and 195–198 each bind substrate; these read FATGRF, AAN, and HAWW. Glu-263 acts as the Nucleophile in catalysis.

This sequence belongs to the glycosyltransferase 6 family. Mn(2+) is required as a cofactor. Expressed in both healthy and inflamed gingival tissue samples at similar levels, with higher expression in the gingival connective tissue compared to gingival epithelium. Strongest expression in testis, followed by leukocytes.

The protein localises to the membrane. This Homo sapiens (Human) protein is Putative glycosyltransferase 6 domain-containing protein 1 (GLT6D1).